The chain runs to 100 residues: NAD(P)H-quinone oxidoreductase subunit 4L, chloroplastic (100 aa).

The next 3 helical transmembrane spans lie at Ile2–Ile22, Val28–Phe48, and Leu61–Leu81.

The protein belongs to the complex I subunit 4L family. As to quaternary structure, NDH is composed of at least 16 different subunits, 5 of which are encoded in the nucleus.

The protein resides in the plastid. It localises to the chloroplast thylakoid membrane. The catalysed reaction is a plastoquinone + NADH + (n+1) H(+)(in) = a plastoquinol + NAD(+) + n H(+)(out). It carries out the reaction a plastoquinone + NADPH + (n+1) H(+)(in) = a plastoquinol + NADP(+) + n H(+)(out). In terms of biological role, NDH shuttles electrons from NAD(P)H:plastoquinone, via FMN and iron-sulfur (Fe-S) centers, to quinones in the photosynthetic chain and possibly in a chloroplast respiratory chain. The immediate electron acceptor for the enzyme in this species is believed to be plastoquinone. Couples the redox reaction to proton translocation, and thus conserves the redox energy in a proton gradient. The polypeptide is NAD(P)H-quinone oxidoreductase subunit 4L, chloroplastic (Chara vulgaris (Common stonewort)).